A 174-amino-acid polypeptide reads, in one-letter code: Inner membrane protein p22 (174 aa).

Residues 1 to 7 (MLHIKMT) lie on the Intravirion side of the membrane. The helical transmembrane segment at 8-28 (ISTLLIALIVLLIIILVVFLY) threads the bilayer. At 29 to 174 (HKKQQPPKKV…LYLPRNHKYA (146 aa)) the chain is on the virion surface side.

It belongs to the asfivirus inner membrane protein p22 family.

The protein resides in the virion membrane. It localises to the host cell membrane. This chain is Inner membrane protein p22, found in African swine fever virus (isolate Pig/Kenya/KEN-50/1950) (ASFV).